Reading from the N-terminus, the 335-residue chain is Thioredoxin-related transmembrane protein 4 (335 aa).

Residues 1–20 (MTGGFCVPVLLAAWLAAAAA) form the signal peptide. One can recognise a Thioredoxin domain in the interval 26–133 (AALPAEESRV…YEDLQNYILE (108 aa)). Active-site nucleophile residues include Cys-60 and Cys-63. An intrachain disulfide couples Cys-60 to Cys-63. A helical membrane pass occupies residues 186-206 (VFFVIATLVFGLFMGLILVVI). The segment at 222-316 (CEQEQSTGEA…EDGAHPADTQ (95 aa)) is disordered. Over residues 238-280 (QDAEEEKDDSNEEENKDSLVDDEEEKEDIGDEDEGEEDEEEDN) the composition is skewed to acidic residues. Residues Ser-247 and Ser-255 each carry the phosphoserine modification. Over residues 286–298 (AEERSDTNERAVV) the composition is skewed to basic and acidic residues.

Its subcellular location is the nucleus inner membrane. It localises to the endoplasmic reticulum membrane. This chain is Thioredoxin-related transmembrane protein 4 (Tmx4), found in Mus musculus (Mouse).